Consider the following 130-residue polypeptide: Ribosome-binding factor A (130 aa).

The protein belongs to the RbfA family. In terms of assembly, monomer. Binds 30S ribosomal subunits, but not 50S ribosomal subunits or 70S ribosomes.

It is found in the cytoplasm. Functionally, one of several proteins that assist in the late maturation steps of the functional core of the 30S ribosomal subunit. Associates with free 30S ribosomal subunits (but not with 30S subunits that are part of 70S ribosomes or polysomes). Required for efficient processing of 16S rRNA. May interact with the 5'-terminal helix region of 16S rRNA. The sequence is that of Ribosome-binding factor A from Methylibium petroleiphilum (strain ATCC BAA-1232 / LMG 22953 / PM1).